Reading from the N-terminus, the 108-residue chain is ATPase inhibitor, mitochondrial (108 aa).

A mitochondrion-targeting transit peptide spans 1-25; the sequence is MAATALAVRSRIGAWSVWAMQSRGF. A disordered region spans residues 25–48; the sequence is FSSDTPEGVRSGAGAVRDAGGAFG. The N-terminal inhibitory region stretch occupies residues 26–52; the sequence is SSDTPEGVRSGAGAVRDAGGAFGKKEQ. Residues 69-108 are a coiled coil; it reads ALKKHHENEISHHVKEIERLQKEIERHKQSIKKLKNDDDD. An antiparallel alpha-helical coiled coil region region spans residues 74–106; sequence HENEISHHVKEIERLQKEIERHKQSIKKLKNDD. Residue lysine 103 is modified to N6-succinyllysine.

Belongs to the ATPase inhibitor family. As to quaternary structure, homodimer; represents the active form and is present at a pH value below 6.5. Homotetramer; represents the inactive form and is present at a pH value above 7.0.

It is found in the mitochondrion. Functionally, endogenous F(1)F(o)-ATPase inhibitor limiting ATP depletion when the mitochondrial membrane potential falls below a threshold and the F(1)F(o)-ATP synthase starts hydrolyzing ATP to pump protons out of the mitochondrial matrix. Required to avoid the consumption of cellular ATP when the F(1)F(o)-ATP synthase enzyme acts as an ATP hydrolase. Indirectly acts as a regulator of heme synthesis in erythroid tissues: regulates heme synthesis by modulating the mitochondrial pH and redox potential, allowing FECH to efficiently catalyze the incorporation of iron into protoporphyrin IX to produce heme. The chain is ATPase inhibitor, mitochondrial from Sus scrofa (Pig).